Consider the following 359-residue polypeptide: C-X-C chemokine receptor type 2 (359 aa).

Residues 1 to 47 are Extracellular-facing; that stretch reads MGEFKVDKFNIEDFFSGDLDIFNYSSGMPSILPDAVPCHSENLEINS. Asparagine 23 is a glycosylation site (N-linked (GlcNAc...) asparagine). A helical membrane pass occupies residues 48-74; that stretch reads YAVVVIYVLVTLLSLVGNSLVMLVILY. The Cytoplasmic portion of the chain corresponds to 75–83; that stretch reads NRSTCSVTD. A helical membrane pass occupies residues 84–104; it reads VYLLNLAIADLFFALTLPVWA. Topologically, residues 105–119 are extracellular; the sequence is ASKVNGWTFGSTLCK. Residues cysteine 118 and cysteine 195 are joined by a disulfide bond. A helical membrane pass occupies residues 120–141; the sequence is IFSYVKEVTFYSSVLLLACISM. Residues 142 to 162 are Cytoplasmic-facing; the sequence is DRYLAIVHATSTLIQKRHLVK. Residues 163 to 182 traverse the membrane as a helical segment; it reads FVCIAMWLLSVILALPILIL. Residues 183-207 are Extracellular-facing; the sequence is RNPVKVNLSTLVCYEDVGNNTSRLR. The chain crosses the membrane as a helical span at residues 208–230; that stretch reads VVLRILPQTFGFLVPLLIMLFCY. The Cytoplasmic segment spans residues 231 to 250; sequence GFTLRTLFKAHMGQKHRAMR. Residues 251 to 272 traverse the membrane as a helical segment; it reads VIFAVVLVFLLCWLPYNLVLFT. At 273–293 the chain is on the extracellular side; sequence DTLMRTKLIKETCERRDDIDK. A helical membrane pass occupies residues 294–314; the sequence is ALNATEILGFLHSCLNPIIYA. At 315 to 359 the chain is on the cytoplasmic side; the sequence is FIGQKFRHGLLKIMATYGLVSKEFLAKEGRPSFVSSSSANTSTTL.

This sequence belongs to the G-protein coupled receptor 1 family. In terms of assembly, interacts with IL8. Interacts with GNAI2. Phosphorylated upon ligand binding; which is required for desensitization.

Its subcellular location is the cell membrane. In terms of biological role, receptor for interleukin-8 which is a powerful neutrophil chemotactic factor. Binding of IL-8 to the receptor causes activation of neutrophils. This response is mediated via a G-protein that activates a phosphatidylinositol-calcium second messenger system. Binds to IL-8 with high affinity. Also binds with high affinity to CXCL3, GRO/MGSA and NAP-2. The protein is C-X-C chemokine receptor type 2 (Cxcr2) of Mus musculus (Mouse).